Reading from the N-terminus, the 510-residue chain is Rab proteins geranylgeranyltransferase component A 1 (510 aa).

The protein belongs to the Rab GDI family. May interact with rab-5, rab-7 and rab-11. Does not interact with rab-3, rab-27 and rab-10. Expressed in several neurons including head neurons, motor neurons located in the ventral nerve cord, HSN and CAN neurons, and tail neurons, and in muscles such as body-wall, pharyngeal, intestinal and anal sphincter. Also expressed in seam cells, the hypodermis and the intestine.

The protein resides in the cytoplasm. Its function is as follows. Substrate-binding subunit of the Rab geranylgeranyltransferase (GGTase) complex. Binds unprenylated Rab proteins and presents the substrate peptide to the catalytic component B and remains bound to it after the geranylgeranyl transfer reaction. The component A is thought to be regenerated by transferring its prenylated Rab back to the donor membrane. Plays a role in neurotransmitter release from presynaptic terminals at neuromuscular junctions. Positively regulates the function of rab-27 in synaptic transmission most likely through mediating rab-27 prenylation. The protein is Rab proteins geranylgeranyltransferase component A 1 of Caenorhabditis elegans.